The sequence spans 804 residues: Leucine--tRNA ligase (804 aa).

The 'HIGH' region motif lies at 40 to 51; sequence PYPSGAGLHVGH. The 'KMSKS' region motif lies at 576–580; the sequence is KMSKS. Lys-579 serves as a coordination point for ATP.

Belongs to the class-I aminoacyl-tRNA synthetase family.

The protein localises to the cytoplasm. It catalyses the reaction tRNA(Leu) + L-leucine + ATP = L-leucyl-tRNA(Leu) + AMP + diphosphate. This chain is Leucine--tRNA ligase, found in Bacillus velezensis (strain DSM 23117 / BGSC 10A6 / LMG 26770 / FZB42) (Bacillus amyloliquefaciens subsp. plantarum).